The primary structure comprises 130 residues: Small ribosomal subunit protein uS9 (130 aa).

Residues 106–130 (RDSRKVERKKPGLKKARKASQFSKR) form a disordered region. Positions 111-130 (VERKKPGLKKARKASQFSKR) are enriched in basic residues.

It belongs to the universal ribosomal protein uS9 family.

The sequence is that of Small ribosomal subunit protein uS9 from Streptococcus pneumoniae (strain ATCC 700669 / Spain 23F-1).